We begin with the raw amino-acid sequence, 591 residues long: Alternative cytochrome c oxidase subunit 1 (591 aa).

Residues 40–60 (VIAIQYSLTASAIGLVALVLS) traverse the membrane as a helical segment. His-88 lines the heme b pocket. The next 11 membrane-spanning stretches (helical) occupy residues 90-110 (MIMVIYLLTALFLGGFGNYLI), 126-146 (MLSYWVYLLAVLVLASAFFVP), 172-192 (GIVLMLSSLILFIIGFTMGGL), 215-235 (VWGIFTATVMALLAFPALFVG), 274-294 (LFWFFGHPEVYIVALPAFGIV), 313-333 (VWAIVAIGALSFVVWAHHMYV), 337-357 (YPYFGFFFATTTLIIAIPTAI), 377-397 (MLFALGFIITFVNGGLTGLFL), 412-432 (VVAHFHMVMGVAPIMVVLGAI), 453-473 (FWVTFLGAYLIFFPMHYLGLL), and 498-518 (FITVVALTVGFAQMVFLFNLV). Positions 280, 284, 329, and 330 each coordinate Cu cation. A cross-link (1'-histidyl-3'-tyrosine (His-Tyr)) is located at residues 280–284 (HPEVY). Residues His-415 and His-417 each contribute to the heme b site.

Belongs to the heme-copper respiratory oxidase family. As to quaternary structure, this alternate cytochrome c oxidase consists of a subunit I and two cytochromes c. Equivalents to subunit 2 and 3 are not present in this complex.

Its subcellular location is the cell membrane. It catalyses the reaction 4 Fe(II)-[cytochrome c] + O2 + 8 H(+)(in) = 4 Fe(III)-[cytochrome c] + 2 H2O + 4 H(+)(out). Cytochrome c oxidase is the component of the respiratory chain that catalyzes the reduction of oxygen to water. Subunits 1-3 form the functional core of the enzyme complex. Co I is the catalytic subunit of the enzyme. Electrons originating in cytochrome c are transferred via the copper A center of subunit 2 and a low-spin heme of subunit 1 to the bimetallic center formed by a high-spin heme and copper B. The sequence is that of Alternative cytochrome c oxidase subunit 1 (coxN) from Bradyrhizobium diazoefficiens (strain JCM 10833 / BCRC 13528 / IAM 13628 / NBRC 14792 / USDA 110).